The following is a 619-amino-acid chain: Isocitrate dehydrogenase kinase/phosphatase (619 aa).

ATP-binding positions include 354–360 and Lys375; that span reads APGIRGM. The active site involves Asp409.

This sequence belongs to the AceK family.

The protein localises to the cytoplasm. It carries out the reaction L-seryl-[isocitrate dehydrogenase] + ATP = O-phospho-L-seryl-[isocitrate dehydrogenase] + ADP + H(+). Functionally, bifunctional enzyme which can phosphorylate or dephosphorylate isocitrate dehydrogenase (IDH) on a specific serine residue. This is a regulatory mechanism which enables bacteria to bypass the Krebs cycle via the glyoxylate shunt in response to the source of carbon. When bacteria are grown on glucose, IDH is fully active and unphosphorylated, but when grown on acetate or ethanol, the activity of IDH declines drastically concomitant with its phosphorylation. The polypeptide is Isocitrate dehydrogenase kinase/phosphatase (Bordetella bronchiseptica (strain ATCC BAA-588 / NCTC 13252 / RB50) (Alcaligenes bronchisepticus)).